Consider the following 128-residue polypeptide: Nucleoside diphosphate kinase B (128 aa).

M1 is subject to N-acetylmethionine. ATP is bound by residues K9, F39, T70, R81, and N91. H94 acts as the Pros-phosphohistidine intermediate in catalysis.

It belongs to the NDK family. Requires Mg(2+) as cofactor.

It is found in the cytoplasm. The protein resides in the nucleus. Its subcellular location is the cell projection. It localises to the lamellipodium. The protein localises to the ruffle. The enzyme catalyses a 2'-deoxyribonucleoside 5'-diphosphate + ATP = a 2'-deoxyribonucleoside 5'-triphosphate + ADP. It carries out the reaction a ribonucleoside 5'-diphosphate + ATP = a ribonucleoside 5'-triphosphate + ADP. In terms of biological role, major role in the synthesis of nucleoside triphosphates other than ATP. The polypeptide is Nucleoside diphosphate kinase B (nme2) (Merluccius australis australis (Austral hake)).